The sequence spans 373 residues: Peptide chain release factor 2 (373 aa).

Gln-251 carries the post-translational modification N5-methylglutamine.

Belongs to the prokaryotic/mitochondrial release factor family. In terms of processing, methylated by PrmC. Methylation increases the termination efficiency of RF2.

The protein resides in the cytoplasm. Functionally, peptide chain release factor 2 directs the termination of translation in response to the peptide chain termination codons UGA and UAA. This chain is Peptide chain release factor 2, found in Salinispora arenicola (strain CNS-205).